A 481-amino-acid polypeptide reads, in one-letter code: Argininosuccinate lyase (481 aa).

Residues 1–17 (MKNAPVDTQSDAATSFE) are compositionally biased toward polar residues. The disordered stretch occupies residues 1–25 (MKNAPVDTQSDAATSFEGTAANPQW).

This sequence belongs to the lyase 1 family. Argininosuccinate lyase subfamily.

It is found in the cytoplasm. The catalysed reaction is 2-(N(omega)-L-arginino)succinate = fumarate + L-arginine. The protein operates within amino-acid biosynthesis; L-arginine biosynthesis; L-arginine from L-ornithine and carbamoyl phosphate: step 3/3. The sequence is that of Argininosuccinate lyase from Gluconobacter oxydans (strain 621H) (Gluconobacter suboxydans).